Consider the following 70-residue polypeptide: ATP synthase subunit c (70 aa).

2 consecutive transmembrane segments (helical) span residues isoleucine 4–leucine 24 and isoleucine 48–isoleucine 68.

It belongs to the ATPase C chain family. In terms of assembly, F-type ATPases have 2 components, F(1) - the catalytic core - and F(0) - the membrane proton channel. F(1) has five subunits: alpha(3), beta(3), gamma(1), delta(1), epsilon(1). F(0) has three main subunits: a(1), b(2) and c(10-14). The alpha and beta chains form an alternating ring which encloses part of the gamma chain. F(1) is attached to F(0) by a central stalk formed by the gamma and epsilon chains, while a peripheral stalk is formed by the delta and b chains.

The protein resides in the cell membrane. Functionally, f(1)F(0) ATP synthase produces ATP from ADP in the presence of a proton or sodium gradient. F-type ATPases consist of two structural domains, F(1) containing the extramembraneous catalytic core and F(0) containing the membrane proton channel, linked together by a central stalk and a peripheral stalk. During catalysis, ATP synthesis in the catalytic domain of F(1) is coupled via a rotary mechanism of the central stalk subunits to proton translocation. Its function is as follows. Key component of the F(0) channel; it plays a direct role in translocation across the membrane. A homomeric c-ring of between 10-14 subunits forms the central stalk rotor element with the F(1) delta and epsilon subunits. This chain is ATP synthase subunit c, found in Oenococcus oeni (strain ATCC BAA-331 / PSU-1).